The following is a 234-amino-acid chain: 2,3,4,5-tetrahydropyridine-2,6-dicarboxylate N-acetyltransferase (234 aa).

This sequence belongs to the transferase hexapeptide repeat family. DapH subfamily.

The catalysed reaction is (S)-2,3,4,5-tetrahydrodipicolinate + acetyl-CoA + H2O = L-2-acetamido-6-oxoheptanedioate + CoA. It participates in amino-acid biosynthesis; L-lysine biosynthesis via DAP pathway; LL-2,6-diaminopimelate from (S)-tetrahydrodipicolinate (acetylase route): step 1/3. Catalyzes the transfer of an acetyl group from acetyl-CoA to tetrahydrodipicolinate. The protein is 2,3,4,5-tetrahydropyridine-2,6-dicarboxylate N-acetyltransferase of Lacticaseibacillus casei (strain BL23) (Lactobacillus casei).